The chain runs to 165 residues: Lipoprotein signal peptidase (165 aa).

Transmembrane regions (helical) follow at residues 11–31 (YWVL…AVLS), 41–61 (VIPS…FSFL), 64–84 (QGGW…AYLV), and 92–112 (FATL…GNVI). Active-site residues include Asp-122 and Asp-140. A helical transmembrane segment spans residues 132–152 (FYPAFNIADSFICVGAVLAVL).

The protein belongs to the peptidase A8 family.

It is found in the cell inner membrane. The catalysed reaction is Release of signal peptides from bacterial membrane prolipoproteins. Hydrolyzes -Xaa-Yaa-Zaa-|-(S,diacylglyceryl)Cys-, in which Xaa is hydrophobic (preferably Leu), and Yaa (Ala or Ser) and Zaa (Gly or Ala) have small, neutral side chains.. It functions in the pathway protein modification; lipoprotein biosynthesis (signal peptide cleavage). In terms of biological role, this protein specifically catalyzes the removal of signal peptides from prolipoproteins. This chain is Lipoprotein signal peptidase, found in Neisseria meningitidis serogroup A / serotype 4A (strain DSM 15465 / Z2491).